The sequence spans 170 residues: Photosystem II extrinsic protein V (170 aa).

The first 33 residues, methionine 1–alanine 33, serve as a signal peptide directing secretion. Heme c is bound by residues cysteine 70, cysteine 73, histidine 74, and methionine 137.

Belongs to the cytochrome c family. PsbV subfamily. PSII is composed of 1 copy each of membrane proteins PsbA, PsbB, PsbC, PsbD, PsbE, PsbF, PsbH, PsbI, PsbJ, PsbK, PsbL, PsbM, PsbT, PsbX, PsbY, PsbZ, Psb30/Ycf12, peripheral proteins PsbO, CyanoQ (PsbQ), PsbU, PsbV and a large number of cofactors. It forms dimeric complexes. It depends on heme c as a cofactor.

Its subcellular location is the cellular thylakoid membrane. Its function is as follows. One of the extrinsic, lumenal subunits of photosystem II (PSII). PSII is a light-driven water plastoquinone oxidoreductase, using light energy to abstract electrons from H(2)O, generating a proton gradient subsequently used for ATP formation. The extrinsic proteins stabilize the structure of photosystem II oxygen-evolving complex (OEC), the ion environment of oxygen evolution and protect the OEC against heat-induced inactivation. Low-potential cytochrome c that plays a role in the OEC of PSII. The protein is Photosystem II extrinsic protein V of Synechococcus sp. (strain CC9902).